We begin with the raw amino-acid sequence, 723 residues long: Cyclin-T2 (723 aa).

Residues Met1–Ser298 form an interaction with MDFIC and MDFI region. The region spanning Phe12 to Ile147 is the Cyclin N-terminal domain. An interaction with POLR2A region spans residues Arg250–Ser298. 2 stretches are compositionally biased toward polar residues: residues Pro297–Phe307 and Asn314–Ala325. Disordered regions lie at residues Pro297–Ala325, Ser340–Gln364, Ala385–Pro428, and Ala458–Lys645. The span at Asp395–His409 shows a compositional bias: basic and acidic residues. Residue Lys404 forms a Glycyl lysine isopeptide (Lys-Gly) (interchain with G-Cter in SUMO2) linkage. A Phosphoserine modification is found at Ser477. Composition is skewed to basic and acidic residues over residues Asp489–Gly503, Gly517–Gly543, and Ile552–Ala565. Positions Asn566–His576 are enriched in basic residues. A Phosphoserine modification is found at Ser596. Residues Ser631 to Lys645 show a composition bias toward low complexity.

It belongs to the cyclin family. Cyclin C subfamily. Interacts with CDK9 to form P-TEFb. Interacts with POLR2A (via the C-terminal domain (CTD)); mediates transcriptional activity. Interacts with HEXIM1; mediates formation of a tripartite complex with KPNA2. Interacts with HEXIM2. Interacts with PKN1; enhances MYOD1-dependent transcription. P-TEFB complex interacts with RB1; promotes phosphorylation of RB1. P-TEFB complex interacts with MYOD1; promotes the transcriptional activity of MYOD1 through its CDK9-mediated phosphorylation. Interacts with MDFI and MDFIC. In terms of tissue distribution, highly expressed in all phases of skeletal muscle differentiation, particularly in later stages. Highly expressed in skeletal muscle. Significantly expressed in heart, brain, kidney, liver, testis, and pancreas.

It localises to the cytoplasm. The protein resides in the perinuclear region. The protein localises to the nucleus. Functionally, regulatory subunit of the cyclin-dependent kinase pair (CDK9/cyclin T) complex, also called positive transcription elongation factor B (P-TEFB), which is proposed to facilitate the transition from abortive to production elongation by phosphorylating the CTD (carboxy-terminal domain) of the large subunit of RNA polymerase II (RNAP II). The activity of this complex is regulated by binding with 7SK snRNA. Plays a role during muscle differentiation; P-TEFB complex interacts with MYOD1; this tripartite complex promotes the transcriptional activity of MYOD1 through its CDK9-mediated phosphorylation and binds the chromatin of promoters and enhancers of muscle-specific genes; this event correlates with hyperphosphorylation of the CTD domain of RNA pol II. In addition, enhances MYOD1-dependent transcription through interaction with PKN1. Involved in early embryo development. The sequence is that of Cyclin-T2 from Mus musculus (Mouse).